The primary structure comprises 668 residues: Spindle assembly abnormal protein 6 homolog (668 aa).

A PISA domain is found at 39–91; it reads VHKKELVVRLSDDTDPFFLYNLTLGEEDFQSLKNQQGLLVEFSAFPQRFIDLL. The stretch at 182–482 forms a coiled coil; it reads LGVTQQALAE…NVIAWLNKQL (301 aa). The segment at 623 to 668 is disordered; the sequence is GSVPVKGQRNGSSAGTVPVRPALPKSGSSPILSAYFPGQQSRLPAS.

Nine homodimers form a cartwheel structure with an internal diameter of 23 nM and radial spokes connecting to the microtubule triplets.

The protein localises to the cytoplasm. It localises to the cytoskeleton. It is found in the microtubule organizing center. Its subcellular location is the centrosome. Functionally, central scaffolding component of the centrioles ensuring their 9-fold symmetry. Required for centrosome biogenesis and duplication: required both for mother-centriole-dependent centriole duplication and deuterosome-dependent centriole amplification in multiciliated cells. The chain is Spindle assembly abnormal protein 6 homolog (sas6) from Xenopus laevis (African clawed frog).